The primary structure comprises 548 residues: Membrane protein insertase YidC (548 aa).

Residues 6–26 form a helical membrane-spanning segment; the sequence is NLLVIALLFVSFMIWQAWEQD. The segment at 28 to 55 is disordered; sequence NPQPQAQQTTQTTTTAAGSAADQGVPAS. Low complexity predominate over residues 30–50; it reads QPQAQQTTQTTTTAAGSAADQ. The next 4 helical transmembrane spans lie at 350-370, 420-440, 458-478, and 499-519; these read FVGN…GIMY, LGGC…YYML, LSAQ…MFFI, and PVIF…YYIV.

It belongs to the OXA1/ALB3/YidC family. Type 1 subfamily. Interacts with the Sec translocase complex via SecD. Specifically interacts with transmembrane segments of nascent integral membrane proteins during membrane integration.

The protein localises to the cell inner membrane. Functionally, required for the insertion and/or proper folding and/or complex formation of integral membrane proteins into the membrane. Involved in integration of membrane proteins that insert both dependently and independently of the Sec translocase complex, as well as at least some lipoproteins. Aids folding of multispanning membrane proteins. The protein is Membrane protein insertase YidC of Shigella boydii serotype 18 (strain CDC 3083-94 / BS512).